The primary structure comprises 476 residues: Protein transport protein Sec61 subunit alpha isoform 1 (476 aa).

The Cytoplasmic portion of the chain corresponds to 1–33; that stretch reads MGIKFLEVIKPFCVILPEIQKPERKIQFKEKVL. The helical transmembrane segment at 34–53 threads the bilayer; that stretch reads WTAITLFIFLVCCQIPLFGI. Over 54-76 the chain is Lumenal; it reads MSSDSADPFYWMRVILASNRGTL. The chain crosses the membrane as a helical span at residues 77–96; the sequence is MELGISPIVTSGLIMQLLAG. Residues 97 to 117 are Cytoplasmic-facing; sequence AKIIEVGDTPKDRALFNGAQK. The helical transmembrane segment at 118-138 threads the bilayer; it reads LFGMTITIGQSIVYVMTGMYG. The Lumenal segment spans residues 139–144; that stretch reads DPSEMG. A helical transmembrane segment spans residues 145-165; sequence AGVCLLITIQLFVAGLIVLLL. The Cytoplasmic portion of the chain corresponds to 166–172; it reads DELLQKG. A helical transmembrane segment spans residues 173-193; that stretch reads YGLGSGISLFIATNICETIVW. Topologically, residues 194 to 240 are lumenal; sequence KAFSPTTVNTGRGMEFEGAIIALFHLLATRTDKVRALREAFYRQNLP. A helical membrane pass occupies residues 241–261; that stretch reads NLMNLIATIFVFAVVIYFQGF. Over 262-288 the chain is Cytoplasmic; sequence RVDLPIKSARYRGQYNTYPIKLFYTSN. A helical transmembrane segment spans residues 289 to 309; that stretch reads IPIILQSALVSNLYVISQMLS. Over 310–354 the chain is Lumenal; sequence ARFSGNLLVSLLGTWSDTSSGGPARAYPVGGLCYYLSPPESFGSV. A helical transmembrane segment spans residues 355–375; it reads LEDPVHAVVYIVFMLGSCAFF. Topologically, residues 376-420 are cytoplasmic; the sequence is SKTWIEVSGSSAKDVAKQLKEQQMVMRGHRETSMVHELNRYIPTA. The chain crosses the membrane as a helical span at residues 421–441; it reads AAFGGLCIGALSVLADFLGAI. The Lumenal segment spans residues 442-445; the sequence is GSGT. A helical transmembrane segment spans residues 446–462; it reads GILLAVTIIYQYFEIFV. Residues 463-476 are Cytoplasmic-facing; that stretch reads KEQSEVGSMGALLF.

Belongs to the SecY/SEC61-alpha family. As to quaternary structure, the SEC61 channel-forming translocon complex consists of channel-forming core components SEC61A1, SEC61B and SEC61G and different auxiliary components such as SEC62 and SEC63. The SEC61 channel associates with the multi-pass translocon (MPT) complex.

It localises to the endoplasmic reticulum membrane. Functionally, component of SEC61 channel-forming translocon complex that mediates transport of signal peptide-containing precursor polypeptides across the endoplasmic reticulum (ER). Forms a ribosome receptor and a gated pore in the ER membrane, both functions required for cotranslational translocation of nascent polypeptides. May cooperate with auxiliary protein SEC62, SEC63 and HSPA5/BiP to enable post-translational transport of small presecretory proteins. The SEC61 channel is also involved in ER membrane insertion of transmembrane proteins: it mediates membrane insertion of the first few transmembrane segments of proteins, while insertion of subsequent transmembrane regions of multi-pass membrane proteins is mediated by the multi-pass translocon (MPT) complex. The SEC61 channel cooperates with the translocating protein TRAM1 to import nascent proteins into the ER. Controls the passive efflux of calcium ions from the ER lumen to the cytosol through SEC61 channel, contributing to the maintenance of cellular calcium homeostasis. Plays a critical role in nephrogenesis, specifically at pronephros stage. The chain is Protein transport protein Sec61 subunit alpha isoform 1 (SEC61A1) from Bos taurus (Bovine).